A 142-amino-acid chain; its full sequence is MRTIFVNEREAVRAWHLIDAAGRPLGRVAARVACLLRGKHKASYTPNQEMGDYVVVINAEKVFLSGTKPKDKMYYRHSGYPGGLKSVSFSALVKRRPVEPLRHAVKGMLPKGPLGRKLIKNVKIYAGSVHPHESQNPVPLSC.

This sequence belongs to the universal ribosomal protein uL13 family. In terms of assembly, part of the 50S ribosomal subunit.

In terms of biological role, this protein is one of the early assembly proteins of the 50S ribosomal subunit, although it is not seen to bind rRNA by itself. It is important during the early stages of 50S assembly. The chain is Large ribosomal subunit protein uL13 from Treponema pallidum (strain Nichols).